The sequence spans 463 residues: Chromosomal replication initiator protein DnaA (463 aa).

Residues 1-84 (MNTNQIILTN…QLFQHYNNAI (84 aa)) are domain I, interacts with DnaA modulators. The domain II stretch occupies residues 84–124 (IKTVEIITKELPASNQATLELPTKTFADIGSSELNSENIFS). The segment at 125 to 343 (TFDIRFTFDN…GALNKVIAHS (219 aa)) is domain III, AAA+ region. Gly171, Gly173, Lys174, and Thr175 together coordinate ATP. Positions 344–463 (NFTAKEITLE…INLMMKILQN (120 aa)) are domain IV, binds dsDNA.

This sequence belongs to the DnaA family. As to quaternary structure, oligomerizes as a right-handed, spiral filament on DNA at oriC.

Its subcellular location is the cytoplasm. Its function is as follows. Plays an essential role in the initiation and regulation of chromosomal replication. ATP-DnaA binds to the origin of replication (oriC) to initiate formation of the DNA replication initiation complex once per cell cycle. Binds the DnaA box (a 9 base pair repeat at the origin) and separates the double-stranded (ds)DNA. Forms a right-handed helical filament on oriC DNA; dsDNA binds to the exterior of the filament while single-stranded (ss)DNA is stabiized in the filament's interior. The ATP-DnaA-oriC complex binds and stabilizes one strand of the AT-rich DNA unwinding element (DUE), permitting loading of DNA polymerase. After initiation quickly degrades to an ADP-DnaA complex that is not apt for DNA replication. Binds acidic phospholipids. The sequence is that of Chromosomal replication initiator protein DnaA from Rickettsia bellii (strain RML369-C).